Consider the following 198-residue polypeptide: Nucleoid occlusion factor SlmA (198 aa).

An HTH tetR-type domain is found at Arg9 to Leu70. The H-T-H motif DNA-binding region spans Thr33 to Phe52. Positions Glu117–Met145 form a coiled coil.

This sequence belongs to the nucleoid occlusion factor SlmA family. In terms of assembly, homodimer. Interacts with FtsZ.

It is found in the cytoplasm. The protein resides in the nucleoid. In terms of biological role, required for nucleoid occlusion (NO) phenomenon, which prevents Z-ring formation and cell division over the nucleoid. Acts as a DNA-associated cell division inhibitor that binds simultaneously chromosomal DNA and FtsZ, and disrupts the assembly of FtsZ polymers. SlmA-DNA-binding sequences (SBS) are dispersed on non-Ter regions of the chromosome, preventing FtsZ polymerization at these regions. In Cronobacter sakazakii (strain ATCC BAA-894) (Enterobacter sakazakii), this protein is Nucleoid occlusion factor SlmA.